The following is a 268-amino-acid chain: 4-hydroxy-tetrahydrodipicolinate reductase (268 aa).

Residues 10-15, D36, 99-101, and 123-126 each bind NAD(+); these read GASGRM, GTT, and APNM. The Proton donor/acceptor role is filled by H156. Residue H157 coordinates (S)-2,3,4,5-tetrahydrodipicolinate. K160 functions as the Proton donor in the catalytic mechanism. Residue 166–167 coordinates (S)-2,3,4,5-tetrahydrodipicolinate; it reads GT.

It belongs to the DapB family.

The protein resides in the cytoplasm. The enzyme catalyses (S)-2,3,4,5-tetrahydrodipicolinate + NAD(+) + H2O = (2S,4S)-4-hydroxy-2,3,4,5-tetrahydrodipicolinate + NADH + H(+). It catalyses the reaction (S)-2,3,4,5-tetrahydrodipicolinate + NADP(+) + H2O = (2S,4S)-4-hydroxy-2,3,4,5-tetrahydrodipicolinate + NADPH + H(+). It functions in the pathway amino-acid biosynthesis; L-lysine biosynthesis via DAP pathway; (S)-tetrahydrodipicolinate from L-aspartate: step 4/4. Functionally, catalyzes the conversion of 4-hydroxy-tetrahydrodipicolinate (HTPA) to tetrahydrodipicolinate. The chain is 4-hydroxy-tetrahydrodipicolinate reductase from Herminiimonas arsenicoxydans.